Here is a 97-residue protein sequence, read N- to C-terminus: Conotoxin Cal6.1b (97 aa).

The N-terminal stretch at 1 to 22 (MKLTTVLVVALLVLAACQFTVT) is a signal peptide. The disordered stretch occupies residues 22–46 (TDNSGDDPENPSLRSAGENQNPDST). The propeptide occupies 23–68 (DNSGDDPENPSLRSAGENQNPDSTKTITAWATRDMTNMRRGLNRPS). Intrachain disulfides connect Cys-71/Cys-87, Cys-78/Cys-91, and Cys-86/Cys-96.

It belongs to the conotoxin O1 superfamily. Expressed by the venom duct.

Its subcellular location is the secreted. Functionally, probable neurotoxin with unknown target. Possibly targets ion channels. The sequence is that of Conotoxin Cal6.1b from Californiconus californicus (California cone).